The chain runs to 290 residues: Phosphatidylglycerol--prolipoprotein diacylglyceryl transferase (290 aa).

7 helical membrane passes run 21-41, 60-80, 96-116, 124-144, 198-218, 225-245, and 260-280; these read VALHWYGLMYLVGFIFAMWLA, LLYAGFLGVFLGGRIGYVLFY, WDGGMSFHGGLIGVILVMVIF, FFQVADFMAPLIPFGLGAGRL, SQLYELALEGVVLFIILNLFI, GSVSGLFLIGYGAFRIIVEFF, and ISMGQILSIPMIVAGIIMMIW. Arg-143 is a binding site for a 1,2-diacyl-sn-glycero-3-phospho-(1'-sn-glycerol).

Belongs to the Lgt family.

The protein resides in the cell inner membrane. It carries out the reaction L-cysteinyl-[prolipoprotein] + a 1,2-diacyl-sn-glycero-3-phospho-(1'-sn-glycerol) = an S-1,2-diacyl-sn-glyceryl-L-cysteinyl-[prolipoprotein] + sn-glycerol 1-phosphate + H(+). It functions in the pathway protein modification; lipoprotein biosynthesis (diacylglyceryl transfer). Its function is as follows. Catalyzes the transfer of the diacylglyceryl group from phosphatidylglycerol to the sulfhydryl group of the N-terminal cysteine of a prolipoprotein, the first step in the formation of mature lipoproteins. The chain is Phosphatidylglycerol--prolipoprotein diacylglyceryl transferase from Enterobacter sp. (strain 638).